The chain runs to 1390 residues: ATPase family AAA domain-containing protein 2 (1390 aa).

The segment at Arg40–Lys63 is disordered. A compositionally biased stretch (low complexity) spans Ala42–Gly57. Ser60 and Ser61 each carry phosphoserine. A Glycyl lysine isopeptide (Lys-Gly) (interchain with G-Cter in SUMO2) cross-link involves residue Lys125. 2 positions are modified to phosphoserine: Ser165 and Ser170. A disordered region spans residues Leu216–Arg380. The span at Lys223–Glu232 shows a compositional bias: basic and acidic residues. Positions Ser244–Glu288 are enriched in acidic residues. Lys317 participates in a covalent cross-link: Glycyl lysine isopeptide (Lys-Gly) (interchain with G-Cter in SUMO2). Residues Ser327, Ser337, Ser342, and Ser410 each carry the phosphoserine modification. Position 467–474 (Gly467–Thr474) interacts with ATP. Phosphoserine is present on residues Ser746 and Ser751. Coiled coils occupy residues Leu970–Arg994 and Tyr1086–Gly1112. The region spanning Glu980–Glu1092 is the Bromo domain. The tract at residues His1124–Lys1163 is disordered. A Glycyl lysine isopeptide (Lys-Gly) (interchain with G-Cter in SUMO2) cross-link involves residue Lys1128. Basic and acidic residues predominate over residues Gly1135–Lys1148. Ser1139 carries the phosphoserine modification. Lys1148 participates in a covalent cross-link: Glycyl lysine isopeptide (Lys-Gly) (interchain with G-Cter in SUMO2). 3 positions are modified to phosphothreonine: Thr1149, Thr1152, and Thr1176. The span at Thr1149–Ala1160 shows a compositional bias: polar residues. The disordered stretch occupies residues Arg1181–Asn1242. The segment covering Gln1185–Ser1200 has biased composition (basic and acidic residues). 3 positions are modified to phosphoserine: Ser1200, Ser1233, and Ser1235. Over residues Gln1229–Asn1242 the composition is skewed to polar residues. Residue Lys1236 forms a Glycyl lysine isopeptide (Lys-Gly) (interchain with G-Cter in SUMO2) linkage. Phosphoserine occurs at positions 1243 and 1302. At Thr1323 the chain carries Phosphothreonine.

Belongs to the AAA ATPase family. As to quaternary structure, interacts with ESR1 and NCOA3 and these interactions are enhanced by estradiol. Interacts with acetylated lysine residues on histone H1.4, H2A, H2B and H3 (in vitro). In terms of tissue distribution, highly expressed in estrogen receptor positive breast tumors and in osteosarcoma tumors.

Its subcellular location is the nucleus. The catalysed reaction is ATP + H2O = ADP + phosphate + H(+). Its function is as follows. May be a transcriptional coactivator of the nuclear receptor ESR1 required to induce the expression of a subset of estradiol target genes, such as CCND1, MYC and E2F1. May play a role in the recruitment or occupancy of CREBBP at some ESR1 target gene promoters. May be required for histone hyperacetylation. Involved in the estrogen-induced cell proliferation and cell cycle progression of breast cancer cells. The protein is ATPase family AAA domain-containing protein 2 (ATAD2) of Homo sapiens (Human).